The chain runs to 263 residues: MLALRLLNVVAPAYFLCISLVTFVLQLFLFLPSMREDPAAARLFSPALLHGALFLFLSANALGNYVLVIQNSPDDLGACQGASARKTPCPSPSTHFCRVCARVTLRHDHHCFFTGNCIGSRNMRNFVLFCLYTSLACLYSMVAGVAYISAVLSISFAHPLAFLTLLPTSISQFFSGAVLGSEMFVILMLYLWFAIGLACAGFCCHQLLLILRGQTRHQVRKGVAVRARPWRKNLQEVFGKRWLLGLLVPMFNVGSESSKQQDK.

The Cytoplasmic portion of the chain corresponds to 1-9; the sequence is MLALRLLNV. A helical transmembrane segment spans residues 10 to 30; that stretch reads VAPAYFLCISLVTFVLQLFLF. The Lumenal portion of the chain corresponds to 31–48; that stretch reads LPSMREDPAAARLFSPAL. A helical membrane pass occupies residues 49–69; the sequence is LHGALFLFLSANALGNYVLVI. Residues 70–125 are Cytoplasmic-facing; it reads QNSPDDLGACQGASARKTPCPSPSTHFCRVCARVTLRHDHHCFFTGNCIGSRNMRN. The DHHC domain occupies 92–131; it reads PSTHFCRVCARVTLRHDHHCFFTGNCIGSRNMRNFVLFCL. C111 functions as the S-palmitoyl cysteine intermediate in the catalytic mechanism. 2 helical membrane passes run 126-146 and 147-167; these read FVLF…AGVA and YISA…TLLP. Topologically, residues 168–182 are cytoplasmic; the sequence is TSISQFFSGAVLGSE. The helical transmembrane segment at 183–203 threads the bilayer; it reads MFVILMLYLWFAIGLACAGFC. Residues 204-263 lie on the Lumenal side of the membrane; it reads CHQLLLILRGQTRHQVRKGVAVRARPWRKNLQEVFGKRWLLGLLVPMFNVGSESSKQQDK.

The protein belongs to the DHHC palmitoyltransferase family. In terms of assembly, interacts with CNN3. As to expression, widely expressed.

The protein localises to the endoplasmic reticulum membrane. It localises to the golgi apparatus membrane. It catalyses the reaction L-cysteinyl-[protein] + hexadecanoyl-CoA = S-hexadecanoyl-L-cysteinyl-[protein] + CoA. Functionally, palmitoyltransferase that could catalyze the addition of palmitate onto various protein substrates and be involved in a variety of cellular processes. Catalyzes the palmitoylation of KCNMA1, regulating localization of KCNMA1 to the plasma membrane. Might also mediate palmitoylation of CNN3. In Homo sapiens (Human), this protein is Palmitoyltransferase ZDHHC22.